A 229-amino-acid chain; its full sequence is Small ribosomal subunit protein uS3 (229 aa).

The region spanning 39–109 (MRKYIKEQLM…QVNIDIVEIR (71 aa)) is the KH type-2 domain. Residues 210–229 (VVSQQNSRPSGPRGPRRPRA) form a disordered region.

The protein belongs to the universal ribosomal protein uS3 family. In terms of assembly, part of the 30S ribosomal subunit. Forms a tight complex with proteins S10 and S14.

Binds the lower part of the 30S subunit head. Binds mRNA in the 70S ribosome, positioning it for translation. The polypeptide is Small ribosomal subunit protein uS3 (Akkermansia muciniphila (strain ATCC BAA-835 / DSM 22959 / JCM 33894 / BCRC 81048 / CCUG 64013 / CIP 107961 / Muc)).